A 420-amino-acid chain; its full sequence is Putative competence-damage inducible protein (420 aa).

It belongs to the CinA family.

The chain is Putative competence-damage inducible protein from Lactiplantibacillus plantarum (strain ATCC BAA-793 / NCIMB 8826 / WCFS1) (Lactobacillus plantarum).